The sequence spans 409 residues: Probable ATP-dependent RNA helicase MG308 homolog (409 aa).

The region spanning 26–179 (VFKVWPRQNV…RKQVAPLTVV (154 aa)) is the Helicase ATP-binding domain. 39–46 (AETGSGKT) serves as a coordination point for ATP. The DEVD box signature appears at 126–129 (DEVD). Residues 190–349 (LVKHFLLNLN…SVHLERDGTL (160 aa)) form the Helicase C-terminal domain.

Belongs to the DEAD box helicase family.

The catalysed reaction is ATP + H2O = ADP + phosphate + H(+). This is Probable ATP-dependent RNA helicase MG308 homolog from Mycoplasma pneumoniae (strain ATCC 29342 / M129 / Subtype 1) (Mycoplasmoides pneumoniae).